The following is a 72-amino-acid chain: MSKEEAIEVEGTVIEPLPNAMFRVELENGHVVLAHISGKMRKYFIKILPGDKVTVELSPYDLSRGRITYRAK.

The S1-like domain occupies M1–K72.

Belongs to the IF-1 family. In terms of assembly, component of the 30S ribosomal translation pre-initiation complex which assembles on the 30S ribosome in the order IF-2 and IF-3, IF-1 and N-formylmethionyl-tRNA(fMet); mRNA recruitment can occur at any time during PIC assembly.

The protein localises to the cytoplasm. One of the essential components for the initiation of protein synthesis. Stabilizes the binding of IF-2 and IF-3 on the 30S subunit to which N-formylmethionyl-tRNA(fMet) subsequently binds. Helps modulate mRNA selection, yielding the 30S pre-initiation complex (PIC). Upon addition of the 50S ribosomal subunit IF-1, IF-2 and IF-3 are released leaving the mature 70S translation initiation complex. In Geobacter metallireducens (strain ATCC 53774 / DSM 7210 / GS-15), this protein is Translation initiation factor IF-1.